Here is a 596-residue protein sequence, read N- to C-terminus: Neuroepithelial cell-transforming gene 1 protein (596 aa).

Met-1 is subject to N-acetylmethionine. A disordered region spans residues 1–44; that stretch reads MEPELAAQKQPRPRRRSRRASGLSTEGATGPSADTSGSELDGRC. The segment at 1-74 is necessary for nuclear localization; the sequence is MEPELAAQKQ…LKRKRREKDD (74 aa). A Nuclear localization signal motif is present at residues 12–19; the sequence is RPRRRSRR. A phosphoserine mark is found at Ser-21 and Ser-32. A compositionally biased stretch (polar residues) spans 22 to 38; sequence GLSTEGATGPSADTSGS. The Nuclear localization signal signature appears at 66-72; that stretch reads KRKRREK. Ser-100, Ser-106, and Ser-122 each carry phosphoserine. A disordered region spans residues 127-146; that stretch reads GDHRSPASAQKFSSRSTVPT. The segment covering 133–145 has biased composition (polar residues); it reads ASAQKFSSRSTVP. The DH domain maps to 174 to 356; that stretch reads RRQEAIYEMS…QGVLSDINLK (183 aa). In terms of domain architecture, PH spans 386 to 501; sequence VLLCHGELRS…WFNCIRAAIA (116 aa). A Phosphoserine modification is found at Ser-508. A disordered region spans residues 562 to 596; that stretch reads MAEDSKSLKTHQTQPGIRRARDKALSGGKRKETLV.

Interacts with RHOA in its GTP- and GDP-bound states, and with CDC42 in its GTP-bound state. Interacts with the PDZ 1 domain of BAIAP1. Widely expressed.

It localises to the cytoplasm. The protein resides in the nucleus. In terms of biological role, acts as a guanine nucleotide exchange factor (GEF) for RhoA GTPase. May be involved in activation of the SAPK/JNK pathway Stimulates genotoxic stress-induced RHOB activity in breast cancer cells leading to their cell death. This Homo sapiens (Human) protein is Neuroepithelial cell-transforming gene 1 protein (NET1).